Here is a 225-residue protein sequence, read N- to C-terminus: MKLFVGLGNPGARYAGNRHNIGYMAVEAIAADHGFGPWRARFQGLTSEGRLGSEQVLLLKPETFMNLSGQSVGEAMRFYKLTPADVIVFHDELDLAPGKLRLKQGGGHAGHNGLRSIHAHVGEAYGRVRLGIGHPGHKDAVAPYVLSDFAKADQDWLADLLRGIADGAEALARGDGAKFQNAVALRMQPPKPEKPKPAAKAPEAQAPEAAPDERSALQKLADRFR.

Y14 lines the tRNA pocket. Residue H19 is the Proton acceptor of the active site. The tRNA site is built by F64, N66, and N112. The interval 182-225 is disordered; it reads AVALRMQPPKPEKPKPAAKAPEAQAPEAAPDERSALQKLADRFR. Residues 198–209 show a composition bias toward low complexity; it reads AAKAPEAQAPEA. Residues 211 to 225 show a composition bias toward basic and acidic residues; the sequence is PDERSALQKLADRFR.

Belongs to the PTH family. In terms of assembly, monomer.

The protein localises to the cytoplasm. It catalyses the reaction an N-acyl-L-alpha-aminoacyl-tRNA + H2O = an N-acyl-L-amino acid + a tRNA + H(+). Its function is as follows. Hydrolyzes ribosome-free peptidyl-tRNAs (with 1 or more amino acids incorporated), which drop off the ribosome during protein synthesis, or as a result of ribosome stalling. Functionally, catalyzes the release of premature peptidyl moieties from peptidyl-tRNA molecules trapped in stalled 50S ribosomal subunits, and thus maintains levels of free tRNAs and 50S ribosomes. The chain is Peptidyl-tRNA hydrolase from Cereibacter sphaeroides (strain ATCC 17029 / ATH 2.4.9) (Rhodobacter sphaeroides).